The primary structure comprises 137 residues: Small ribosomal subunit protein uS12 (137 aa).

The tract at residues 1–23 (MPTINQLVRKPRKSNATKSKSPA) is disordered. D102 carries the post-translational modification 3-methylthioaspartic acid.

The protein belongs to the universal ribosomal protein uS12 family. Part of the 30S ribosomal subunit. Contacts proteins S8 and S17. May interact with IF1 in the 30S initiation complex.

Its function is as follows. With S4 and S5 plays an important role in translational accuracy. In terms of biological role, interacts with and stabilizes bases of the 16S rRNA that are involved in tRNA selection in the A site and with the mRNA backbone. Located at the interface of the 30S and 50S subunits, it traverses the body of the 30S subunit contacting proteins on the other side and probably holding the rRNA structure together. The combined cluster of proteins S8, S12 and S17 appears to hold together the shoulder and platform of the 30S subunit. This Leuconostoc citreum (strain KM20) protein is Small ribosomal subunit protein uS12.